The sequence spans 333 residues: Cytochrome f (333 aa).

A signal peptide spans 1–44; the sequence is MRNACTRARLTRTARAMVKTLFIAIASVTFFFTSDLALPQSAAA. Positions 45, 66, 69, and 70 each coordinate heme. Residues 299–318 form a helical membrane-spanning segment; the sequence is VGWLIAFVALVMLAQVMLVL.

This sequence belongs to the cytochrome f family. The 4 large subunits of the cytochrome b6-f complex are cytochrome b6, subunit IV (17 kDa polypeptide, PetD), cytochrome f and the Rieske protein, while the 4 small subunits are PetG, PetL, PetM and PetN. The complex functions as a dimer. It depends on heme as a cofactor.

It is found in the cellular thylakoid membrane. Functionally, component of the cytochrome b6-f complex, which mediates electron transfer between photosystem II (PSII) and photosystem I (PSI), cyclic electron flow around PSI, and state transitions. This chain is Cytochrome f, found in Trichormus variabilis (strain ATCC 29413 / PCC 7937) (Anabaena variabilis).